Consider the following 208-residue polypeptide: Protein-L-isoaspartate O-methyltransferase (208 aa).

Residue S59 is part of the active site.

It belongs to the methyltransferase superfamily. L-isoaspartyl/D-aspartyl protein methyltransferase family.

It localises to the cytoplasm. The catalysed reaction is [protein]-L-isoaspartate + S-adenosyl-L-methionine = [protein]-L-isoaspartate alpha-methyl ester + S-adenosyl-L-homocysteine. Functionally, catalyzes the methyl esterification of L-isoaspartyl residues in peptides and proteins that result from spontaneous decomposition of normal L-aspartyl and L-asparaginyl residues. It plays a role in the repair and/or degradation of damaged proteins. The polypeptide is Protein-L-isoaspartate O-methyltransferase (Citrobacter koseri (strain ATCC BAA-895 / CDC 4225-83 / SGSC4696)).